A 445-amino-acid chain; its full sequence is Coronin-A (445 aa).

WD repeat units lie at residues 77-117 (GHKS…LTDS), 127-167 (GHKR…NLTT), 170-209 (GHSDMITSCEWNHNGSQIVTTCKDKKARVFDPRTNSIVNE), and 259-299 (DSAS…PYIH). Residues 410–444 (KNEKELREEYEKLKIRVAYLESEIVKKDAKIKELT) are a coiled coil.

The protein belongs to the WD repeat coronin family. In terms of assembly, binds to F-actin.

It localises to the cell surface. In terms of biological role, required for normal motility. Participates in cytokinesis. The protein is Coronin-A (corA) of Dictyostelium discoideum (Social amoeba).